A 270-amino-acid polypeptide reads, in one-letter code: Sorting nexin-11 (270 aa).

The PX domain maps to 16–132; it reads VITVRVQDPR…HLFLQSQLSV (117 aa). The a 1,2-diacyl-sn-glycero-3-phospho-(1D-myo-inositol-3-phosphate) site is built by Arg-59, Lys-85, and Arg-99. Positions 135–139 are important for membrane trafficking; that stretch reads IEACV. Basic and acidic residues predominate over residues 168–177; the sequence is SSSHLAKGDQ. Positions 168–203 are disordered; the sequence is SSSHLAKGDQPKSCCFLPRSGRRSSPSPPPSEEKDH.

The protein belongs to the sorting nexin family. As to quaternary structure, monomer. Interacts with TRPV3; this interaction promotes TRPV3 trafficking from the cell membrane to lysosome for degradation.

It localises to the cell membrane. The protein resides in the endosome. It is found in the cytoplasm. Its function is as follows. Phosphoinositide-binding protein involved in protein sorting and membrane trafficking in endosomes. Regulates the levels of TRPV3 by promoting its trafficking from the cell membrane to lysosome for degradation. This is Sorting nexin-11 (SNX11) from Homo sapiens (Human).